The sequence spans 138 residues: ATP synthase epsilon chain (138 aa).

This sequence belongs to the ATPase epsilon chain family. F-type ATPases have 2 components, CF(1) - the catalytic core - and CF(0) - the membrane proton channel. CF(1) has five subunits: alpha(3), beta(3), gamma(1), delta(1), epsilon(1). CF(0) has three main subunits: a, b and c.

The protein localises to the cell inner membrane. In terms of biological role, produces ATP from ADP in the presence of a proton gradient across the membrane. This Vesicomyosocius okutanii subsp. Calyptogena okutanii (strain HA) protein is ATP synthase epsilon chain.